Consider the following 816-residue polypeptide: H(+)/Cl(-) exchange transporter 5 (816 aa).

Residues 1 to 26 are disordered; it reads MAMWQGAMDNRGFQQGSFSSFQNSSS. The Cytoplasmic portion of the chain corresponds to 1 to 124; sequence MAMWQGAMDN…WALIHSVSDA (124 aa). Positions 12–25 are enriched in low complexity; the sequence is GFQQGSFSSFQNSS. A run of 2 helical transmembrane segments spans residues 125-162 and 208-231; these read FSGW…ICTG and VNYF…VKVF. The Selectivity filter part_1 motif lies at 237–241; it reads GSGIP. Residue serine 238 participates in chloride binding. An intramembrane region (helical) is located at residues 240–247; sequence IPEIKTIL. The next 2 helical transmembrane spans lie at 256–275 and 281–300; these read LGKW…VSSG and EGPL…HCFN. Positions 279 to 283 match the Selectivity filter part_2 motif; the sequence is GKEGP. 2 intramembrane regions (helical) span residues 312–324 and 328–336; these read VLSA…VSVA and PIGGVLFSL. The next 5 helical transmembrane spans lie at 348-366, 389-415, 422-442, 498-518, and 523-542; these read LWRS…RSIN, LVPF…AWCR, LGKY…ILAF, MWQL…TFGM, and GLFI…LGVG. The Selectivity filter part_3 signature appears at 523–527; that stretch reads GLFIP. Phenylalanine 525 lines the chloride pocket. Positions 570 to 584 form an intramembrane region, helical; that stretch reads GLYAMVGAAACLGGV. Residues 585-587 constitute an intramembrane region (note=Loop between two helices); sequence TRM. The segment at residues 588–599 is an intramembrane region (helical); the sequence is TVSLVVIMFELT. An intramembrane region (note=Loop between two helices) is located at residues 600–604; sequence GGLEY. A helical transmembrane segment spans residues 605–622; that stretch reads IVPLMAAAMTSKWVADAL. The Cytoplasmic portion of the chain corresponds to 623-816; that stretch reads GREGIYDAHI…NQDPDSILFN (194 aa). Tyrosine 628 provides a ligand contact to chloride. 2 consecutive CBS domains span residues 656-720 and 752-812; these read MKPR…ARKK and ILDL…DPDS. Residues threonine 666, 687–689, and 794–797 contribute to the ATP site; these read YSG and TKKD.

This sequence belongs to the chloride channel (TC 2.A.49) family. ClC-5/CLCN5 subfamily. Interacts with NEDD4 and NEDD4L. Post-translationally, ubiquitinated by NEDD4L in the presence of albumin; which promotes endocytosis and proteasomal degradation. In terms of tissue distribution, kidney. Moderately expressed in aortic vascular smooth muscle and endothelial cells, and at a slightly higher level in the coronary vascular smooth muscle.

It is found in the golgi apparatus membrane. The protein resides in the endosome membrane. Its subcellular location is the cell membrane. The enzyme catalyses 2 chloride(in) + H(+)(out) = 2 chloride(out) + H(+)(in). Proton-coupled chloride transporter. Functions as antiport system and exchanges chloride ions against protons. Important for normal acidification of the endosome lumen. May play an important role in renal tubular function. The CLC channel family contains both chloride channels and proton-coupled anion transporters that exchange chloride or another anion for protons. The absence of conserved gating glutamate residues is typical for family members that function as channels. In Homo sapiens (Human), this protein is H(+)/Cl(-) exchange transporter 5.